A 444-amino-acid chain; its full sequence is Phosphoglucosamine mutase (444 aa).

The active-site Phosphoserine intermediate is serine 102. Residues serine 102, aspartate 241, aspartate 243, and aspartate 245 each coordinate Mg(2+). Serine 102 carries the post-translational modification Phosphoserine.

Belongs to the phosphohexose mutase family. Requires Mg(2+) as cofactor. Post-translationally, activated by phosphorylation.

It catalyses the reaction alpha-D-glucosamine 1-phosphate = D-glucosamine 6-phosphate. Catalyzes the conversion of glucosamine-6-phosphate to glucosamine-1-phosphate. This is Phosphoglucosamine mutase from Glaesserella parasuis serovar 5 (strain SH0165) (Haemophilus parasuis).